We begin with the raw amino-acid sequence, 284 residues long: Ubiquinone biosynthesis protein COQ4, mitochondrial (284 aa).

Residues histidine 165, aspartate 166, histidine 169, and glutamate 181 each coordinate Zn(2+).

The protein belongs to the COQ4 family. In terms of assembly, component of a multi-subunit COQ enzyme complex, composed of at least COQ3, COQ4, COQ5, COQ6, COQ7 and COQ9. Zn(2+) is required as a cofactor.

The protein localises to the mitochondrion inner membrane. It carries out the reaction a 4-hydroxy-3-methoxy-5-(all-trans-polyprenyl)benzoate + H(+) = a 2-methoxy-6-(all-trans-polyprenyl)phenol + CO2. It participates in cofactor biosynthesis; ubiquinone biosynthesis. Functionally, lyase that catalyzes the C1-decarboxylation of 4-hydroxy-3-methoxy-5-(all-trans-polyprenyl)benzoic acid into 2-methoxy-6-(all-trans-polyprenyl)phenol during ubiquinone biosynthesis. This is Ubiquinone biosynthesis protein COQ4, mitochondrial from Ajellomyces dermatitidis (strain ER-3 / ATCC MYA-2586) (Blastomyces dermatitidis).